Consider the following 280-residue polypeptide: MEKIALITDSTSDVDKDMIEKYDIKVLPLRIIYKDKEYIDRVTISPREVYDNLHIEVPSTSLPSMGDMESLYEKLEAEGYTHVIGVTISSNLSGTYNSLKLVSEGHENIKSFIFDSRSITMGEGAIIKECGEMILQGKNFDYIVEKMPKMRENIKVYYIVDTLKYLIKGGRIGKVSGTVGQLLDIKPIISINEEGVYYTHCKAKGKKQAIKKLIEILRRTLSEKHCDIWVMHGGAYDEIDKLKDLVSGIENINNLNSGEISPVAGVHTGPGLLGVVIFKK.

The DegV domain maps to Ile4–Lys279. Thr60 and Ser93 together coordinate hexadecanoate.

Its function is as follows. May bind long-chain fatty acids, such as palmitate, and may play a role in lipid transport or fatty acid metabolism. In Clostridium acetobutylicum (strain ATCC 824 / DSM 792 / JCM 1419 / IAM 19013 / LMG 5710 / NBRC 13948 / NRRL B-527 / VKM B-1787 / 2291 / W), this protein is DegV domain-containing protein CA_C1624.